The chain runs to 288 residues: Chemotaxis protein methyltransferase 2 (288 aa).

The region spanning 1 to 280 (MNEIVITDTD…TGYYKPHKGK (280 aa)) is the CheR-type methyltransferase domain. S-adenosyl-L-methionine contacts are provided by residues asparagine 76, threonine 78, arginine 82, glutamate 119, aspartate 145, 200–201 (NL), and 219–220 (RN).

It carries out the reaction L-glutamyl-[protein] + S-adenosyl-L-methionine = [protein]-L-glutamate 5-O-methyl ester + S-adenosyl-L-homocysteine. Its function is as follows. Methylation of the membrane-bound methyl-accepting chemotaxis proteins (MCP) to form gamma-glutamyl methyl ester residues in MCP. The polypeptide is Chemotaxis protein methyltransferase 2 (cheR2) (Vibrio cholerae serotype O1 (strain ATCC 39315 / El Tor Inaba N16961)).